Reading from the N-terminus, the 109-residue chain is Large ribosomal subunit protein uL24 (109 aa).

Positions 1 to 24 (MANVTTDIKRNDTVAVTSGKDKGK) are disordered.

It belongs to the universal ribosomal protein uL24 family. Part of the 50S ribosomal subunit.

One of two assembly initiator proteins, it binds directly to the 5'-end of the 23S rRNA, where it nucleates assembly of the 50S subunit. Functionally, one of the proteins that surrounds the polypeptide exit tunnel on the outside of the subunit. The protein is Large ribosomal subunit protein uL24 of Koribacter versatilis (strain Ellin345).